The following is a 488-amino-acid chain: Rhamnulokinase (488 aa).

13–17 (ASSGR) is a binding site for ATP. Cys68 and Cys222 are oxidised to a cystine. Residues Gly83 and 236 to 238 (HDT) contribute to the substrate site. The active-site Proton acceptor is the Asp237. Thr259 serves as a coordination point for ATP. Asn296 is a substrate binding site. ATP is bound at residue Gln304. An intrachain disulfide couples Cys353 to Cys370. An ATP-binding site is contributed by Gly402. Residues Cys413 and Cys417 are joined by a disulfide bond.

It belongs to the rhamnulokinase family. Mg(2+) serves as cofactor.

It catalyses the reaction L-rhamnulose + ATP = L-rhamnulose 1-phosphate + ADP + H(+). It functions in the pathway carbohydrate degradation; L-rhamnose degradation; glycerone phosphate from L-rhamnose: step 2/3. In terms of biological role, involved in the catabolism of L-rhamnose (6-deoxy-L-mannose). Catalyzes the transfer of the gamma-phosphate group from ATP to the 1-hydroxyl group of L-rhamnulose to yield L-rhamnulose 1-phosphate. This chain is Rhamnulokinase, found in Klebsiella pneumoniae (strain 342).